The following is a 276-amino-acid chain: Tyrosinase (276 aa).

Cu cation is bound by residues histidine 38, histidine 56, histidine 66, histidine 193, histidine 197, and histidine 219.

It belongs to the tyrosinase family. Cu(2+) is required as a cofactor.

It carries out the reaction 2 L-dopa + O2 = 2 L-dopaquinone + 2 H2O. The catalysed reaction is L-tyrosine + O2 = L-dopaquinone + H2O. Its function is as follows. This is a copper-containing oxidase that functions in the formation of pigments such as melanins and other polyphenolic compounds. The polypeptide is Tyrosinase (melC2) (Streptomyces galbus).